Here is a 93-residue protein sequence, read N- to C-terminus: YcgL domain-containing protein Ssed_2518 (93 aa).

The region spanning 1 to 85 (MICAVYKSRR…PKVNLLEQHK (85 aa)) is the YcgL domain.

The protein is YcgL domain-containing protein Ssed_2518 of Shewanella sediminis (strain HAW-EB3).